Consider the following 726-residue polypeptide: PTS system glucose-specific EIICBA component (726 aa).

Positions 1–453 constitute a PTS EIIC type-1 domain; sequence MMKDTFKNVL…FNYATPGRNG (453 aa). 9 helical membrane-spanning segments follow: residues 18-38, 62-82, 90-110, 139-159, 184-204, 311-331, 344-364, 365-385, and 419-439; these read FGKALMVVIAVMPAAGLMISI, IGWGVIGNLHILFALAIGGSW, AFAAGLAFILINRITGTIFGV, VLEAPALNMGVFVGIISGFVG, FVPFVVILRSAIAAILLAAFW, FKVGQMIGSFGILMGVIVAIY, GMMIATALATFLTGVTEPIEY, MFMFIATPMYLVYSLVQGAAF, and IVNFVWVTVLFAVIMYFIANF. Residues 473–555 enclose the PTS EIIB type-1 domain; it reads GSQAVNIINL…QDILDSGEII (83 aa). The Phosphocysteine intermediate; for EIIB activity role is filled by cysteine 495. In terms of domain architecture, PTS EIIA type-1 spans 596-700; sequence DPVFAQKMMG…ETSTVVVFTN (105 aa). Histidine 648 acts as the Tele-phosphohistidine intermediate; for EIIA activity in catalysis.

The protein resides in the cell membrane. It carries out the reaction N(pros)-phospho-L-histidyl-[protein] + D-glucose(out) = D-glucose 6-phosphate(in) + L-histidyl-[protein]. The phosphoenolpyruvate-dependent sugar phosphotransferase system (sugar PTS), a major carbohydrate active transport system, catalyzes the phosphorylation of incoming sugar substrates concomitantly with their translocation across the cell membrane. This system is involved in glucose transport. The chain is PTS system glucose-specific EIICBA component (exp5) from Streptococcus pneumoniae serotype 4 (strain ATCC BAA-334 / TIGR4).